A 660-amino-acid polypeptide reads, in one-letter code: ATPase WRNIP1 (660 aa).

The UBZ4-type zinc-finger motif lies at 17 to 44 (QVQCPVCQQMMPAAHINSHLDRCLLLHP). The Zn(2+) site is built by cysteine 20, cysteine 23, histidine 31, histidine 35, and cysteine 39. Positions 48-191 (AEPAAGSHRA…DDPGHWDADA (144 aa)) are disordered. Serine 65 and serine 75 each carry phosphoserine. The span at 76-89 (ESSALKQPATPTAA) shows a compositional bias: polar residues. A Glycyl lysine isopeptide (Lys-Gly) (interchain with G-Cter in ubiquitin) cross-link involves residue lysine 81. Phosphothreonine is present on threonine 85. A phosphoserine mark is found at serine 91 and serine 92. Acidic residues predominate over residues 92–104 (SEGEGEEGDDGGE). A Phosphothreonine modification is found at threonine 116. Over residues 135–155 (ARKGMGKRPAAAAAAGSASPR) the composition is skewed to low complexity. A Glycyl lysine isopeptide (Lys-Gly) (interchain with G-Cter in ubiquitin) cross-link involves residue lysine 141. At serine 153 the chain carries Phosphoserine. Positions 159–182 (EAEAQEEEEAGVDGDGDADVDGED) are enriched in acidic residues. Residue lysine 220 forms a Glycyl lysine isopeptide (Lys-Gly) (interchain with G-Cter in ubiquitin) linkage. 265–271 (PGCGKTT) provides a ligand contact to ATP. Residues lysine 296, lysine 305, lysine 311, lysine 317, and lysine 330 each participate in a glycyl lysine isopeptide (Lys-Gly) (interchain with G-Cter in ubiquitin) cross-link. Residue lysine 477 forms a Glycyl lysine isopeptide (Lys-Gly) (interchain with G-Cter in SUMO2); alternate linkage. Lysine 477 participates in a covalent cross-link: Glycyl lysine isopeptide (Lys-Gly) (interchain with G-Cter in ubiquitin); alternate. Phosphotyrosine occurs at positions 529 and 557. Residue lysine 622 forms a Glycyl lysine isopeptide (Lys-Gly) (interchain with G-Cter in ubiquitin) linkage. Residue lysine 628 forms a Glycyl lysine isopeptide (Lys-Gly) (interchain with G-Cter in ubiquitin); alternate linkage. Lysine 628 carries the post-translational modification N6-acetyllysine; alternate. Lysine 631 participates in a covalent cross-link: Glycyl lysine isopeptide (Lys-Gly) (interchain with G-Cter in ubiquitin).

Belongs to the AAA ATPase family. RarA/MGS1/WRNIP1 subfamily. As to quaternary structure, forms homooligomers, possibly octamers. Directly interacts with POLD1, POLD2 and POLD4. Interacts with the N-terminal domain of WRN. Interacts (via UBZ4-type zinc finger) with monoubiquitin and polyubiquitin. Interacts with TRIM14 and PPP6C; these interactions positively regulate the RIGI signaling pathway. In terms of processing, sumoylated with SUMO1 and SUMO2/3. Ubiquitously expressed.

The protein localises to the nucleus. It localises to the cytoplasm. It carries out the reaction ATP + H2O = ADP + phosphate + H(+). Its function is as follows. Functions as a modulator of initiation or reinitiation events during DNA polymerase delta-mediated DNA synthesis. In the presence of ATP, stimulation of DNA polymerase delta-mediated DNA synthesis is decreased. Also plays a role in the innate immune defense against viruses. Stabilizes the RIGI dsRNA interaction and promotes RIGI 'Lys-63'-linked polyubiquitination. In turn, RIGI transmits the signal through mitochondrial MAVS. This Mus musculus (Mouse) protein is ATPase WRNIP1.